A 901-amino-acid chain; its full sequence is Protein translocase subunit SecA (901 aa).

ATP contacts are provided by residues Q87, 105-109 (GEGKT), and D512. The segment at 859–901 (HQDDDSAAAAALAAQTGERKVGRNDPCPCGSGKKYKQCHGRLQ) is disordered. The Zn(2+) site is built by C885, C887, C896, and H897. Positions 891 to 901 (KKYKQCHGRLQ) are enriched in basic residues.

It belongs to the SecA family. Monomer and homodimer. Part of the essential Sec protein translocation apparatus which comprises SecA, SecYEG and auxiliary proteins SecDF-YajC and YidC. Zn(2+) is required as a cofactor.

The protein localises to the cell inner membrane. It is found in the cytoplasm. It carries out the reaction ATP + H2O + cellular proteinSide 1 = ADP + phosphate + cellular proteinSide 2.. In terms of biological role, part of the Sec protein translocase complex. Interacts with the SecYEG preprotein conducting channel. Has a central role in coupling the hydrolysis of ATP to the transfer of proteins into and across the cell membrane, serving both as a receptor for the preprotein-SecB complex and as an ATP-driven molecular motor driving the stepwise translocation of polypeptide chains across the membrane. The chain is Protein translocase subunit SecA from Escherichia coli O157:H7.